The following is a 497-amino-acid chain: Guanosine-5'-triphosphate,3'-diphosphate pyrophosphatase (497 aa).

Belongs to the GppA/Ppx family. GppA subfamily.

The enzyme catalyses guanosine 3'-diphosphate 5'-triphosphate + H2O = guanosine 3',5'-bis(diphosphate) + phosphate + H(+). The protein operates within purine metabolism; ppGpp biosynthesis; ppGpp from GTP: step 2/2. Functionally, catalyzes the conversion of pppGpp to ppGpp. Guanosine pentaphosphate (pppGpp) is a cytoplasmic signaling molecule which together with ppGpp controls the 'stringent response', an adaptive process that allows bacteria to respond to amino acid starvation, resulting in the coordinated regulation of numerous cellular activities. The protein is Guanosine-5'-triphosphate,3'-diphosphate pyrophosphatase of Photobacterium profundum (strain SS9).